We begin with the raw amino-acid sequence, 338 residues long: Heat shock factor 2-binding protein (338 aa).

Positions 1 to 20 (MAATVGDGSGTEEACRNMES) are disordered. A coiled-coil region spans residues 12 to 126 (EEACRNMESK…LLQQAEYCTQ (115 aa)). Residues 18–55 (MESKEEFVKVRKKDLERLTTEVMQIRDFLPRILNGELL) form an interaction with BRME1 region. The interval 87–338 (ARLETAQADS…EDLRALDCNV (252 aa)) is interaction with BRCA2.

Interacts (via C-terminus) with BNC1. Associates with HSF2. The interaction seems to occur between the trimerization domain of HSF2 and the N-terminal hydrophilic region of HSF2BP. Interacts (via N-terminus) with BRME1. Interacts with BRCA2 and BRME1; the interactions are direct and allow the formation of a ternary complex. The complex BRME1:HSF2BP:BRCA2 interacts with SPATA22, MEIOB and RAD51. Sumoylated by UBE2I in response to MEKK1-mediated stimuli. As to expression, expressed in testis and, to a lesser extent, in lung and muscle.

The protein localises to the cytoplasm. It is found in the chromosome. In terms of biological role, meiotic recombination factor component of recombination bridges involved in meiotic double-strand break repair. Modulates the localization of recombinases DMC1:RAD51 to meiotic double-strand break (DSB) sites through the interaction with BRCA2 and its recruitment during meiotic recombination. Indispensable for the DSB repair, homologous synapsis, and crossover formation that are needed for progression past metaphase I, is essential for spermatogenesis and male fertility. Required for proper recombinase recruitment in female meiosis. Inhibits BNC1 transcriptional activity during spermatogenesis, probably by sequestering it in the cytoplasm. May be involved in modulating HSF2 activation in testis. The chain is Heat shock factor 2-binding protein from Mus musculus (Mouse).